We begin with the raw amino-acid sequence, 196 residues long: Oplophorus-luciferin 2-monooxygenase catalytic subunit (196 aa).

The N-terminal stretch at 1-27 is a signal peptide; that stretch reads MAYSTLFIIALTAVVTQASSTQKSNLT.

As to quaternary structure, heterotetramer of a catalytic 19 kDa and a non-catalytic 35 kDa subunit.

The protein localises to the secreted. It catalyses the reaction coelenterazine + O2 = coelenteramide + hnu + CO2. Inhibited by micromolar Cu(2+). Functionally, catalytic subunit of oplophorus-luciferin 2-monooxygenase. Oxidoreductase that converts coelenterazine (the oplophorus luciferin) to coelenteramide under emission of blue light with a maximum at 454 nm. Is also active with bisdeoxycoelenterazine. The protein is Oplophorus-luciferin 2-monooxygenase catalytic subunit of Oplophorus gracilirostris (Luminous shrimp).